Consider the following 129-residue polypeptide: Transcriptional regulator WhiB2 (129 aa).

A disordered region spans residues 23 to 45; that stretch reads SHAPHIDTGSTPTGAAGRPQLSL. Residues 66-123 enclose the 4Fe-4S Wbl-type domain; sequence LCAQTDPEAFFPEKGGSTREAKRICQGCEVRDACLEYALAHDERFGIWGGLSERERRR. Residues Cys67, Cys90, Cys93, and Cys99 each coordinate [4Fe-4S] cluster.

Belongs to the WhiB family. Requires [4Fe-4S] cluster as cofactor. The Fe-S cluster can be nitrosylated by nitric oxide (NO). Post-translationally, upon Fe-S cluster removal intramolecular disulfide bonds are formed.

The protein localises to the cytoplasm. In terms of biological role, acts as a transcriptional regulator. Probably redox-responsive. The apo- but not holo-form probably binds DNA. In Mycolicibacterium smegmatis (strain ATCC 700084 / mc(2)155) (Mycobacterium smegmatis), this protein is Transcriptional regulator WhiB2 (whiB2).